A 324-amino-acid polypeptide reads, in one-letter code: MSSSPDSPPILHRLPRVAIIGAGRVGSTLAQRIAEKNLADVVLLDIVEGMPQGLALDLLEARGIELHNRQIIGTNNYADTSGSQIVVITAGFPRKPGMSRDDLLRTNAKIVVEAAKQAIAYSPCAIFIVVTNPLDVMTYLAWEATGLPRNRIMGMAGVLDSARFETFIALELGVLPADVKAMVLGSHGDLMVPLSRHATVNGIPITELLDAATIERLVERTRNGGAEIVELMQTGGAFFAPASATSLMVESILLNQSRLLPVSVYLQGEYGLKDVVIGVPCRLGLNGIESVIELNLSDSEREALQTSAQSVQKNIERWHSTQHS.

Residues 21-26 and aspartate 45 each bind NAD(+); that span reads GAGRVG. Positions 94 and 100 each coordinate substrate. Residues asparagine 107 and 130–132 contribute to the NAD(+) site; that span reads VTN. Substrate is bound by residues asparagine 132 and arginine 163. The Proton acceptor role is filled by histidine 187.

The protein belongs to the LDH/MDH superfamily. MDH type 3 family.

It carries out the reaction (S)-malate + NAD(+) = oxaloacetate + NADH + H(+). Its function is as follows. Catalyzes the reversible oxidation of malate to oxaloacetate. This is Malate dehydrogenase from Trichormus variabilis (strain ATCC 29413 / PCC 7937) (Anabaena variabilis).